Consider the following 437-residue polypeptide: Serine--tRNA ligase (437 aa).

Residue 227-229 coordinates L-serine; the sequence is TAE. Residues 258–260 and Val-274 contribute to the ATP site; that span reads RSE. Glu-281 contributes to the L-serine binding site. 347–350 serves as a coordination point for ATP; it reads ETHS. Position 382 (Thr-382) interacts with L-serine.

The protein belongs to the class-II aminoacyl-tRNA synthetase family. Type-1 seryl-tRNA synthetase subfamily. Homodimer. The tRNA molecule binds across the dimer.

It localises to the cytoplasm. The catalysed reaction is tRNA(Ser) + L-serine + ATP = L-seryl-tRNA(Ser) + AMP + diphosphate + H(+). The enzyme catalyses tRNA(Sec) + L-serine + ATP = L-seryl-tRNA(Sec) + AMP + diphosphate + H(+). The protein operates within aminoacyl-tRNA biosynthesis; selenocysteinyl-tRNA(Sec) biosynthesis; L-seryl-tRNA(Sec) from L-serine and tRNA(Sec): step 1/1. Its function is as follows. Catalyzes the attachment of serine to tRNA(Ser). Is also able to aminoacylate tRNA(Sec) with serine, to form the misacylated tRNA L-seryl-tRNA(Sec), which will be further converted into selenocysteinyl-tRNA(Sec). This Deinococcus geothermalis (strain DSM 11300 / CIP 105573 / AG-3a) protein is Serine--tRNA ligase.